The sequence spans 327 residues: Ferrochelatase (327 aa).

Fe cation contacts are provided by histidine 196 and glutamate 277.

Belongs to the ferrochelatase family.

The protein resides in the cytoplasm. The enzyme catalyses heme b + 2 H(+) = protoporphyrin IX + Fe(2+). It functions in the pathway porphyrin-containing compound metabolism; protoheme biosynthesis; protoheme from protoporphyrin-IX: step 1/1. In terms of biological role, catalyzes the ferrous insertion into protoporphyrin IX. The sequence is that of Ferrochelatase from Gloeobacter violaceus (strain ATCC 29082 / PCC 7421).